We begin with the raw amino-acid sequence, 217 residues long: Protein dao-4 (217 aa).

The signal sequence occupies residues Met-1 to Ala-21.

It localises to the nucleus. It is found in the secreted. Probably acts downstream of the Wnt signaling pathway. The sequence is that of Protein dao-4 from Caenorhabditis elegans.